The primary structure comprises 787 residues: Protein translocase subunit SecA (787 aa).

Residues Gln-85, 103–107 (GEGKT), and Asp-492 contribute to the ATP site.

The protein belongs to the SecA family. In terms of assembly, monomer and homodimer. Part of the essential Sec protein translocation apparatus which comprises SecA, SecYEG and auxiliary proteins SecDF. Other proteins may also be involved.

It is found in the cell membrane. The protein resides in the cytoplasm. It catalyses the reaction ATP + H2O + cellular proteinSide 1 = ADP + phosphate + cellular proteinSide 2.. Part of the Sec protein translocase complex. Interacts with the SecYEG preprotein conducting channel. Has a central role in coupling the hydrolysis of ATP to the transfer of proteins into and across the cell membrane, serving as an ATP-driven molecular motor driving the stepwise translocation of polypeptide chains across the membrane. This is Protein translocase subunit SecA from Lactiplantibacillus plantarum (strain ATCC BAA-793 / NCIMB 8826 / WCFS1) (Lactobacillus plantarum).